A 152-amino-acid polypeptide reads, in one-letter code: Large ribosomal subunit protein bL9 (152 aa).

This sequence belongs to the bacterial ribosomal protein bL9 family.

Binds to the 23S rRNA. This chain is Large ribosomal subunit protein bL9, found in Crocosphaera subtropica (strain ATCC 51142 / BH68) (Cyanothece sp. (strain ATCC 51142)).